The following is a 145-amino-acid chain: Major pollen allergen Ole e 1 (145 aa).

Intrachain disulfides connect cysteine 19–cysteine 90, cysteine 22–cysteine 131, and cysteine 43–cysteine 78. Asparagine 111 is a glycosylation site (N-linked (GlcNAc...) (complex) asparagine; alternate). A glycan (N-linked (GlcNAc...) (high mannose) asparagine; alternate) is linked at asparagine 111.

It belongs to the Ole e I family. In terms of processing, N-glycosylated; contains high mannose (Man(7)-GlcNAc) and partially fucosylated complex glycans (GlcNAc-Man(3)-Xyl-GlcNAc). Complex glycans may contribute to the antigenicity. Exists both in a glycosylated and in a non-glycosylated form. Ole e 1 and Ole e 1.0103 are the only non-glycosylated isoallergens. A second potential glycosylation site exists at position 50 in cv. Bella de Espana and cv. Hojiblanca. As to expression, expressed in tapetum and pollen grains. Not detected in petals, roots or leaves.

Its subcellular location is the endoplasmic reticulum. It localises to the secreted. Its function is as follows. May be involved in recognition between pollen-stigma and pollen tube-style cells. This Olea europaea (Common olive) protein is Major pollen allergen Ole e 1.